Here is a 511-residue protein sequence, read N- to C-terminus: Lysine--tRNA ligase (511 aa).

2 residues coordinate Mg(2+): Glu421 and Glu428.

The protein belongs to the class-II aminoacyl-tRNA synthetase family. Homodimer. Mg(2+) serves as cofactor.

The protein localises to the cytoplasm. It carries out the reaction tRNA(Lys) + L-lysine + ATP = L-lysyl-tRNA(Lys) + AMP + diphosphate. This chain is Lysine--tRNA ligase, found in Janthinobacterium sp. (strain Marseille) (Minibacterium massiliensis).